A 33-amino-acid chain; its full sequence is Cytochrome b6-f complex subunit 7 (33 aa).

The helical transmembrane segment at A9–I29 threads the bilayer.

Belongs to the PetM family. The 4 large subunits of the cytochrome b6-f complex are cytochrome b6, subunit IV (17 kDa polypeptide, PetD), cytochrome f and the Rieske protein, while the 4 small subunits are PetG, PetL, PetM and PetN. The complex functions as a dimer.

It is found in the plastid. The protein resides in the cyanelle thylakoid membrane. Component of the cytochrome b6-f complex, which mediates electron transfer between photosystem II (PSII) and photosystem I (PSI), cyclic electron flow around PSI, and state transitions. In Cyanophora paradoxa, this protein is Cytochrome b6-f complex subunit 7.